Here is a 433-residue protein sequence, read N- to C-terminus: Serine/threonine-protein kinase toxin HipA (433 aa).

Position 147 is a phosphoserine; by autocatalysis (Ser-147). ATP-binding positions include 151–154 (VQPK), Lys-178, and 220–222 (ERF). Catalysis depends on Asp-306, which acts as the Proton acceptor. ATP-binding positions include 308–311 (HGKN) and 327–328 (YD). 2 DNA-binding regions span residues 380-384 (RIARR) and Arg-429.

Belongs to the HipA Ser/Thr kinase family. As to quaternary structure, monomer. Forms a HipA(2)HipB(2)-DNA complex with cognate antitoxin HipB; has higher affinity for the latter when HipB is prebound to DNA and HipA is phosphorylated. Binds DNA in the ternary complex.

It catalyses the reaction L-seryl-[protein] + ATP = O-phospho-L-seryl-[protein] + ADP + H(+). The catalysed reaction is L-threonyl-[protein] + ATP = O-phospho-L-threonyl-[protein] + ADP + H(+). Functionally, toxic component of a type II toxin-antitoxin (TA) system; overexpression in wild-type temporarily inhibits cell growth, overexpression in a hipAB deletion leads to acute growth inhibition. The toxic effect of HipA is neutralized by its cognate antitoxin HipB. In the ternary phosphoserine-HipA-HipB-DNA complex the DNA is bent about 125 degrees; all HipA in the crystallized ternary complex is phosphorylated. In E.coli phosphorylation of HipA is thought to release HipB from the HipA-HipB-DNA complex, suggesting the complex functions differently in the 2 bacteria. Phosphorylates Glu-tRNA-ligase (GltX, on 'Ser-239') in vivo, with HipB probably acts as a corepressor for transcription of the hipBA promoter. This is Serine/threonine-protein kinase toxin HipA from Shewanella oneidensis (strain ATCC 700550 / JCM 31522 / CIP 106686 / LMG 19005 / NCIMB 14063 / MR-1).